Consider the following 503-residue polypeptide: Dentin matrix acidic phosphoprotein 1 (503 aa).

The first 16 residues, 1-16, serve as a signal peptide directing secretion; the sequence is MKTVILLVFLWGLSCA. Positions 23–35 are enriched in basic and acidic residues; sequence HNTESESSEERTG. The disordered stretch occupies residues 23–503; it reads HNTESESSEE…QDDNDCQDGY (481 aa). Residues 54–63 are compositionally biased toward polar residues; that stretch reads QASPEGQANS. Residues 98 to 119 are compositionally biased toward acidic residues; it reads KEDDEDDSGDDTFGDEDNDLGP. The span at 138-150 shows a compositional bias: low complexity; the sequence is DTTQSSEDSTSQE. Positions 158 to 175 are enriched in basic and acidic residues; it reads SDSKDHDSEDEADSRPEA. The segment covering 203–215 has biased composition (acidic residues); sequence SEFDDEGMQSDDP. 3 stretches are compositionally biased toward basic and acidic residues: residues 233–243, 267–286, and 293–303; these read RSEESKGDHEP, HVSEEDYRGELTDSNSRETQ, and TASKEESRSES. A compositionally biased stretch (low complexity) spans 332–348; the sequence is EPSQESSSESQEGVTSE. A Cell attachment site motif is present at residues 350-352; it reads RGD. N-linked (GlcNAc...) asparagine glycosylation occurs at Asn-356. Residues 362–373 are compositionally biased toward acidic residues; the sequence is DQEDSESSEEDS. The N-linked (GlcNAc...) asparagine glycan is linked to Asn-394. The span at 407-418 shows a compositional bias: polar residues; that stretch reads AQDGDSSSQEGL. Residues 419-435 are compositionally biased toward low complexity; it reads QSQSASTESRSQESQSE. Residue Asn-457 is glycosylated (N-linked (GlcNAc...) asparagine). Residues 467–492 are compositionally biased toward basic and acidic residues; that stretch reads EDIRPKNMEADSRKLIVDAYHNKPIG. Residues 493–503 are compositionally biased toward acidic residues; sequence DQDDNDCQDGY.

Interacts with importin alpha. Post-translationally, phosphorylated in the cytosol and extracellular matrix and unphosphorylated in the nucleus. Phosphorylation is necessary for nucleocytoplasmic transport and may be catalyzed by a nuclear isoform of CK2 and can be augmented by calcium. Phosphorylated (in vitro) by FAM20C in the extracellular medium at sites within the S-x-E/pS motif. In terms of tissue distribution, expressed in tooth particularly in odontoblast, ameloblast and cementoblast. Also expressed in bone particularly in osteoblast.

It localises to the nucleus. It is found in the cytoplasm. Its subcellular location is the secreted. The protein localises to the extracellular space. The protein resides in the extracellular matrix. Functionally, may have a dual function during osteoblast differentiation. In the nucleus of undifferentiated osteoblasts, unphosphorylated form acts as a transcriptional component for activation of osteoblast-specific genes like osteocalcin. During the osteoblast to osteocyte transition phase it is phosphorylated and exported into the extracellular matrix, where it regulates nucleation of hydroxyapatite. The sequence is that of Dentin matrix acidic phosphoprotein 1 from Mus musculus (Mouse).